The sequence spans 142 residues: Interleukin-3 (142 aa).

The N-terminal stretch at 1–18 (MSHLPILLLLLLVSPGLQ) is a signal peptide. Asn33 is a glycosylation site (N-linked (GlcNAc...) asparagine). Cys34 and Cys102 are disulfide-bonded.

Belongs to the IL-3 family. As to quaternary structure, monomer. As to expression, activated T-cells, mast cells, natural killer cells.

The protein localises to the secreted. Functionally, granulocyte/macrophage colony-stimulating factors are cytokines that act in hematopoiesis by controlling the production, differentiation, and function of 2 related white cell populations of the blood, the granulocytes and the monocytes-macrophages. Its function is as follows. This CSF induces granulocytes, macrophages, mast cells, stem cells, erythroid cells, eosinophils and megakaryocytes. The protein is Interleukin-3 (IL3) of Callithrix jacchus (White-tufted-ear marmoset).